The following is a 260-amino-acid chain: Phosphate import ATP-binding protein PstB (260 aa).

The ABC transporter domain maps to 14–255 (IETENLNLFY…PKNTKTEEYI (242 aa)). 46–53 (GPSGCGKS) contributes to the ATP binding site.

It belongs to the ABC transporter superfamily. Phosphate importer (TC 3.A.1.7) family. As to quaternary structure, the complex is composed of two ATP-binding proteins (PstB), two transmembrane proteins (PstC and PstA) and a solute-binding protein (PstS).

It is found in the cell inner membrane. The catalysed reaction is phosphate(out) + ATP + H2O = ADP + 2 phosphate(in) + H(+). Functionally, part of the ABC transporter complex PstSACB involved in phosphate import. Responsible for energy coupling to the transport system. This is Phosphate import ATP-binding protein PstB from Borreliella burgdorferi (strain ATCC 35210 / DSM 4680 / CIP 102532 / B31) (Borrelia burgdorferi).